A 153-amino-acid chain; its full sequence is MNKKRAKGNSHSIRPVRSGPPKWVRFTREEVELLVEELAKRGYPPSMIGMVLRDQYGVPLVKQITGRKLTAILQDRNMKPKIPEDLFNLMRRAVNIRRHLFEYPKDKSAKRGLEEVESKIRRLASYYKETGKLPQEWSYDPAKAELLVTGSLY.

It belongs to the universal ribosomal protein uS15 family. In terms of assembly, part of the 30S ribosomal subunit.

The protein is Small ribosomal subunit protein uS15 of Sulfolobus acidocaldarius (strain ATCC 33909 / DSM 639 / JCM 8929 / NBRC 15157 / NCIMB 11770).